The sequence spans 89 residues: Small ribosomal subunit protein uS15 (89 aa).

Belongs to the universal ribosomal protein uS15 family. In terms of assembly, part of the 30S ribosomal subunit. Forms a bridge to the 50S subunit in the 70S ribosome, contacting the 23S rRNA.

In terms of biological role, one of the primary rRNA binding proteins, it binds directly to 16S rRNA where it helps nucleate assembly of the platform of the 30S subunit by binding and bridging several RNA helices of the 16S rRNA. Functionally, forms an intersubunit bridge (bridge B4) with the 23S rRNA of the 50S subunit in the ribosome. In Desulfatibacillum aliphaticivorans, this protein is Small ribosomal subunit protein uS15.